A 307-amino-acid polypeptide reads, in one-letter code: ATP synthase gamma chain (307 aa).

It belongs to the ATPase gamma chain family. F-type ATPases have 2 components, CF(1) - the catalytic core - and CF(0) - the membrane proton channel. CF(1) has five subunits: alpha(3), beta(3), gamma(1), delta(1), epsilon(1). CF(0) has three main subunits: a, b and c.

Its subcellular location is the cell membrane. Its function is as follows. Produces ATP from ADP in the presence of a proton gradient across the membrane. The gamma chain is believed to be important in regulating ATPase activity and the flow of protons through the CF(0) complex. The protein is ATP synthase gamma chain of Bifidobacterium longum subsp. infantis (strain ATCC 15697 / DSM 20088 / JCM 1222 / NCTC 11817 / S12).